A 131-amino-acid polypeptide reads, in one-letter code: Small ribosomal subunit protein uS8 (131 aa).

The protein belongs to the universal ribosomal protein uS8 family. Part of the 30S ribosomal subunit. Contacts proteins S5 and S12.

One of the primary rRNA binding proteins, it binds directly to 16S rRNA central domain where it helps coordinate assembly of the platform of the 30S subunit. The chain is Small ribosomal subunit protein uS8 from Hamiltonella defensa subsp. Acyrthosiphon pisum (strain 5AT).